We begin with the raw amino-acid sequence, 494 residues long: Protein nucleotidyltransferase YdiU (494 aa).

ATP-binding residues include Gly99, Gly101, Arg102, Lys118, Asp130, Gly131, Arg181, and Arg188. Asp261 functions as the Proton acceptor in the catalytic mechanism. Residues Asn262 and Asp271 each contribute to the Mg(2+) site. ATP is bound at residue Asp271.

It belongs to the SELO family. It depends on Mg(2+) as a cofactor. Mn(2+) is required as a cofactor.

The enzyme catalyses L-seryl-[protein] + ATP = 3-O-(5'-adenylyl)-L-seryl-[protein] + diphosphate. The catalysed reaction is L-threonyl-[protein] + ATP = 3-O-(5'-adenylyl)-L-threonyl-[protein] + diphosphate. It carries out the reaction L-tyrosyl-[protein] + ATP = O-(5'-adenylyl)-L-tyrosyl-[protein] + diphosphate. It catalyses the reaction L-histidyl-[protein] + UTP = N(tele)-(5'-uridylyl)-L-histidyl-[protein] + diphosphate. The enzyme catalyses L-seryl-[protein] + UTP = O-(5'-uridylyl)-L-seryl-[protein] + diphosphate. The catalysed reaction is L-tyrosyl-[protein] + UTP = O-(5'-uridylyl)-L-tyrosyl-[protein] + diphosphate. Functionally, nucleotidyltransferase involved in the post-translational modification of proteins. It can catalyze the addition of adenosine monophosphate (AMP) or uridine monophosphate (UMP) to a protein, resulting in modifications known as AMPylation and UMPylation. The chain is Protein nucleotidyltransferase YdiU from Variovorax paradoxus (strain S110).